A 124-amino-acid chain; its full sequence is Replication restart protein PriB (124 aa).

An SSB domain is found at 12–112; sequence IDNCLTLTGI…LHTEQIEFID (101 aa).

It belongs to the PriB family. Homodimer. Interacts with PriA and DnaT. Component of the replication restart primosome. Primosome assembly occurs via a 'hand-off' mechanism. PriA binds to replication forks, subsequently PriB then DnaT bind; DnaT then displaces ssDNA to generate the helicase loading substrate.

Involved in the restart of stalled replication forks, which reloads the replicative helicase on sites other than the origin of replication; the PriA-PriB pathway is the major replication restart pathway. During primosome assembly it facilitates complex formation between PriA and DnaT on DNA; stabilizes PriA on DNA. Stimulates the DNA unwinding activity of PriA helicase. The polypeptide is Replication restart protein PriB (Haemophilus ducreyi (strain 35000HP / ATCC 700724)).